Here is a 351-residue protein sequence, read N- to C-terminus: DNA polymerase IV (351 aa).

One can recognise a UmuC domain in the interval Ile4–Gly185. Residues Asp8 and Asp103 each coordinate Mg(2+). Residue Glu104 is part of the active site.

It belongs to the DNA polymerase type-Y family. Monomer. The cofactor is Mg(2+).

The protein resides in the cytoplasm. It carries out the reaction DNA(n) + a 2'-deoxyribonucleoside 5'-triphosphate = DNA(n+1) + diphosphate. Poorly processive, error-prone DNA polymerase involved in untargeted mutagenesis. Copies undamaged DNA at stalled replication forks, which arise in vivo from mismatched or misaligned primer ends. These misaligned primers can be extended by PolIV. Exhibits no 3'-5' exonuclease (proofreading) activity. May be involved in translesional synthesis, in conjunction with the beta clamp from PolIII. The protein is DNA polymerase IV of Escherichia coli (strain ATCC 8739 / DSM 1576 / NBRC 3972 / NCIMB 8545 / WDCM 00012 / Crooks).